A 108-amino-acid polypeptide reads, in one-letter code: X antigen family member 5 (108 aa).

The segment at valine 20–leucine 108 is disordered. Basic and acidic residues-rich tracts occupy residues serine 40–aspartate 52 and glutamate 94–leucine 108.

Belongs to the GAGE family.

The protein is X antigen family member 5 (XAGE5) of Homo sapiens (Human).